The primary structure comprises 218 residues: Small ribosomal subunit protein uS3c (218 aa).

In terms of domain architecture, KH type-2 spans 47-118; it reads VQKHMRISSG…RLNIAIARVP (72 aa).

This sequence belongs to the universal ribosomal protein uS3 family. Part of the 30S ribosomal subunit.

It localises to the plastid. The protein localises to the chloroplast. This is Small ribosomal subunit protein uS3c (rps3) from Nuphar advena (Common spatterdock).